We begin with the raw amino-acid sequence, 400 residues long: Large envelope protein (400 aa).

Met1 carries the post-translational modification N-acetylmethionine. 2 disordered regions span residues 1–24 and 86–114; these read MGGWSSKPRKGMGTNLSVPNPLGF and TTVPAAPPPASTNRQSGRQPTPFSPPLRD. Gly2 carries N-myristoyl glycine; by host lipidation. Residues 2–119 form a pre-S1 region; sequence GGWSSKPRKG…PPLRDTHPQA (118 aa). The tract at residues 2–174 is pre-S; the sequence is GGWSSKPRKG…SSKTGDPVPN (173 aa). Residues 2–181 are Virion surface; in external conformation-facing; sequence GGWSSKPRKG…VPNMENIASG (180 aa). The Intravirion; in internal conformation portion of the chain corresponds to 2–253; that stretch reads GGWSSKPRKG…PGYRWMCLRR (252 aa). An N-linked (GlcNAc...) asparagine glycan is attached at Trp4. Polar residues predominate over residues 96–106; that stretch reads STNRQSGRQPT. The segment at 120-174 is pre-S2; it reads MQWNSTTFLQTLQDSRVRALYLPAGGSSSGTVSPAQNTVSAISSISSKTGDPVPN. Residues 182 to 202 traverse the membrane as a helical segment; that stretch reads LLGHLLVLQAGFFSLTKILTI. Residues 203–253 are Intravirion; in external conformation-facing; that stretch reads PQSLDSWWTSLNFLGGTPACPGQNSQSQISSHSPTCCPPICPGYRWMCLRR. A helical membrane pass occupies residues 254–274; the sequence is FIIFLCILLLCLIFLLVLLDY. The Virion surface segment spans residues 275-348; the sequence is QGMLPVCPLT…WASVRFSWLS (74 aa). An N-linked (GlcNAc...) asparagine; by host glycan is attached at Asn320. Residues 349-369 traverse the membrane as a helical segment; that stretch reads LLVPFVQWFVGLSPTVWLSVI. The Intravirion portion of the chain corresponds to 370–375; it reads WMMWFW. Residues 376 to 398 traverse the membrane as a helical segment; sequence GPSLYNILRPFMPLLPTFFCLWV. Residues 399–400 are Virion surface-facing; it reads YI.

It belongs to the orthohepadnavirus major surface antigen family. As to quaternary structure, interacts (via its myristoylated pre-S1 region) with the host SLC10A1/NTCP; this interaction is essential for viral entry. In its internal form (Li-HBsAg), interacts with the capsid protein and with the isoform S. Interacts with host chaperone CANX. In terms of assembly, associates with host chaperone CANX through its pre-S2 N glycan; this association may be essential for isoform M proper secretion. As to quaternary structure, interacts with isoform L. Interacts with the antigens of satellite virus HDV (HDVAgs); this interaction is required for encapsidation of HDV genomic RNA. In terms of processing, isoform M is N-terminally acetylated by host at a ratio of 90%, and N-glycosylated by host at the pre-S2 region. Post-translationally, myristoylated; this modification is essential for its interaction with the host protein SLC10A1/NTCP.

It is found in the virion membrane. Its function is as follows. The large envelope protein exists in two topological conformations, one which is termed 'external' or Le-HBsAg and the other 'internal' or Li-HBsAg. In its external conformation the protein attaches the virus to cell receptors and thereby initiating infection. This interaction determines the species specificity and liver tropism. This attachment induces virion internalization predominantly through caveolin-mediated endocytosis. The large envelope protein also assures fusion between virion membrane and endosomal membrane. In its internal conformation the protein plays a role in virion morphogenesis and mediates the contact with the nucleocapsid like a matrix protein. In terms of biological role, the middle envelope protein plays an important role in the budding of the virion. It is involved in the induction of budding in a nucleocapsid independent way. In this process the majority of envelope proteins bud to form subviral lipoprotein particles of 22 nm of diameter that do not contain a nucleocapsid. The polypeptide is Large envelope protein (Hepatitis B virus genotype B2 subtype adw (isolate China/patient4/1996) (HBV-B)).